Here is a 348-residue protein sequence, read N- to C-terminus: ECA polysaccharide chain length modulation protein (348 aa).

A run of 2 helical transmembrane segments spans residues 31–51 (FWIIGIGLLFALIALAYTFFA) and 323–343 (AFLMIMWGIVGALIGAGVALT).

It belongs to the WzzB/Cld/Rol family. In terms of assembly, probably part of a complex composed of WzxE, WzyE and WzzE.

It is found in the cell inner membrane. It participates in bacterial outer membrane biogenesis; enterobacterial common antigen biosynthesis. Modulates the polysaccharide chain length of enterobacterial common antigen (ECA). In Salmonella typhimurium (strain LT2 / SGSC1412 / ATCC 700720), this protein is ECA polysaccharide chain length modulation protein.